The sequence spans 360 residues: Phospho-N-acetylmuramoyl-pentapeptide-transferase (360 aa).

10 helical membrane passes run 27–47, 73–93, 94–114, 132–152, 168–188, 199–219, 236–256, 263–283, 288–308, and 338–358; these read ILSI…LIAW, TMGG…WADL, TNPY…VGFV, WKYF…YAYG, VMPQ…VGTS, GLAI…AWAT, ASEL…FLWF, VFMG…IAVL, FLLV…ILQV, and VIVR…ATLK.

The protein belongs to the glycosyltransferase 4 family. MraY subfamily. It depends on Mg(2+) as a cofactor.

It localises to the cell inner membrane. It catalyses the reaction UDP-N-acetyl-alpha-D-muramoyl-L-alanyl-gamma-D-glutamyl-meso-2,6-diaminopimeloyl-D-alanyl-D-alanine + di-trans,octa-cis-undecaprenyl phosphate = di-trans,octa-cis-undecaprenyl diphospho-N-acetyl-alpha-D-muramoyl-L-alanyl-D-glutamyl-meso-2,6-diaminopimeloyl-D-alanyl-D-alanine + UMP. Its pathway is cell wall biogenesis; peptidoglycan biosynthesis. In terms of biological role, catalyzes the initial step of the lipid cycle reactions in the biosynthesis of the cell wall peptidoglycan: transfers peptidoglycan precursor phospho-MurNAc-pentapeptide from UDP-MurNAc-pentapeptide onto the lipid carrier undecaprenyl phosphate, yielding undecaprenyl-pyrophosphoryl-MurNAc-pentapeptide, known as lipid I. The sequence is that of Phospho-N-acetylmuramoyl-pentapeptide-transferase from Aliivibrio fischeri (strain MJ11) (Vibrio fischeri).